A 270-amino-acid polypeptide reads, in one-letter code: Acyl-[acyl-carrier-protein]--UDP-N-acetylglucosamine O-acyltransferase (270 aa).

The protein belongs to the transferase hexapeptide repeat family. LpxA subfamily. Homotrimer.

Its subcellular location is the cytoplasm. The enzyme catalyses a (3R)-hydroxyacyl-[ACP] + UDP-N-acetyl-alpha-D-glucosamine = a UDP-3-O-[(3R)-3-hydroxyacyl]-N-acetyl-alpha-D-glucosamine + holo-[ACP]. It functions in the pathway glycolipid biosynthesis; lipid IV(A) biosynthesis; lipid IV(A) from (3R)-3-hydroxytetradecanoyl-[acyl-carrier-protein] and UDP-N-acetyl-alpha-D-glucosamine: step 1/6. Its function is as follows. Involved in the biosynthesis of lipid A, a phosphorylated glycolipid that anchors the lipopolysaccharide to the outer membrane of the cell. The sequence is that of Acyl-[acyl-carrier-protein]--UDP-N-acetylglucosamine O-acyltransferase from Helicobacter acinonychis (strain Sheeba).